The sequence spans 659 residues: Exoribonuclease 2 (659 aa).

The RNB domain occupies Arg-189 to Asn-532. The S1 motif domain occupies Asn-576 to Leu-658.

This sequence belongs to the RNR ribonuclease family. RNase II subfamily.

It localises to the cytoplasm. The enzyme catalyses Exonucleolytic cleavage in the 3'- to 5'-direction to yield nucleoside 5'-phosphates.. Functionally, involved in mRNA degradation. Hydrolyzes single-stranded polyribonucleotides processively in the 3' to 5' direction. This chain is Exoribonuclease 2, found in Glaesserella parasuis serovar 5 (strain SH0165) (Haemophilus parasuis).